We begin with the raw amino-acid sequence, 314 residues long: Acetaldehyde dehydrogenase (314 aa).

14-17 (SGNI) contacts NAD(+). The active-site Acyl-thioester intermediate is C132. Residues 163-171 (SAGPGTRAN) and N291 each bind NAD(+).

This sequence belongs to the acetaldehyde dehydrogenase family.

It carries out the reaction acetaldehyde + NAD(+) + CoA = acetyl-CoA + NADH + H(+). The sequence is that of Acetaldehyde dehydrogenase from Polaromonas sp. (strain JS666 / ATCC BAA-500).